The primary structure comprises 280 residues: tRNase Z TRZ1 (280 aa).

It belongs to the RNase Z family. Homodimer. Zn(2+) serves as cofactor. Requires Ca(2+) as cofactor. It depends on Mn(2+) as a cofactor. Mg(2+) is required as a cofactor.

The protein localises to the cytoplasm. The catalysed reaction is Endonucleolytic cleavage of RNA, removing extra 3' nucleotides from tRNA precursor, generating 3' termini of tRNAs. A 3'-hydroxy group is left at the tRNA terminus and a 5'-phosphoryl group is left at the trailer molecule.. Its function is as follows. Zinc phosphodiesterase, which displays tRNA 3'-processing endonuclease activity. Involved in tRNA maturation, by removing a 3'-trailer from precursor tRNA. Can use bis-(p-nitophenyl) phosphate (bpNPP) as substrate. Involved in the processing of small nucleolar RNAs (snoRNAs). The protein is tRNase Z TRZ1 of Arabidopsis thaliana (Mouse-ear cress).